Reading from the N-terminus, the 204-residue chain is UPF0301 protein Mflv_0850 (204 aa).

It belongs to the UPF0301 (AlgH) family.

The sequence is that of UPF0301 protein Mflv_0850 from Mycolicibacterium gilvum (strain PYR-GCK) (Mycobacterium gilvum (strain PYR-GCK)).